The chain runs to 467 residues: 3-isopropylmalate dehydratase large subunit (467 aa).

[4Fe-4S] cluster is bound by residues cysteine 349, cysteine 409, and cysteine 412.

The protein belongs to the aconitase/IPM isomerase family. LeuC type 1 subfamily. Heterodimer of LeuC and LeuD. [4Fe-4S] cluster serves as cofactor.

The enzyme catalyses (2R,3S)-3-isopropylmalate = (2S)-2-isopropylmalate. It participates in amino-acid biosynthesis; L-leucine biosynthesis; L-leucine from 3-methyl-2-oxobutanoate: step 2/4. Functionally, catalyzes the isomerization between 2-isopropylmalate and 3-isopropylmalate, via the formation of 2-isopropylmaleate. The sequence is that of 3-isopropylmalate dehydratase large subunit from Ruegeria sp. (strain TM1040) (Silicibacter sp.).